Consider the following 146-residue polypeptide: Hemoglobin subunit beta (146 aa).

At Val1 the chain carries N-acetylvaline. Positions 2 to 146 constitute a Globin domain; sequence HLTDAEKNLV…VANALAHKYH (145 aa). Heme b is bound at residue His63. Lys82 is modified (N6-acetyllysine). His92 provides a ligand contact to heme b. An S-nitrosocysteine modification is found at Cys93. Lys144 is modified (N6-acetyllysine).

This sequence belongs to the globin family. In terms of assembly, heterotetramer of two alpha chains and two beta chains. In terms of tissue distribution, red blood cells.

Its function is as follows. Involved in oxygen transport from the lung to the various peripheral tissues. This is Hemoglobin subunit beta (HBB) from Mesocricetus brandti (Brandt's hamster).